We begin with the raw amino-acid sequence, 395 residues long: Oxalate oxidoreductase subunit alpha (395 aa).

In terms of assembly, dimer of heterotrimer of one alpha, one beta and one delta subunit.

The enzyme catalyses oxidized 2[4Fe-4S]-[ferredoxin] + oxalate = reduced 2[4Fe-4S]-[ferredoxin] + 2 CO2. In terms of biological role, catalyzes the anaerobic oxidation of oxalate using a broad range of electron acceptors, including ferredoxin and the nickel-dependent carbon monoxide dehydrogenase. Does not require coenzyme A as cosubstrate. Enables anaerobic growth on oxalate which is used as energy source by the bacteria. This is Oxalate oxidoreductase subunit alpha from Moorella thermoacetica (strain ATCC 39073 / JCM 9320).